The sequence spans 1413 residues: Zinc finger SWIM domain-containing protein 8 (1413 aa).

Phosphoserine occurs at positions 36, 48, and 53. The segment at 45–65 (RKQSAGPNSPTGGGGGGGSGG) is disordered. Gly residues predominate over residues 55–65 (TGGGGGGGSGG). Residues 172–208 (YNVAVMFDRCRVTSCSCTCGAGAKWCTHVVALCLFRI) form an SWIM-type zinc finger. Positions 600-817 (ESQTHKPQTL…ESHAPHVPNQ (218 aa)) are disordered. Over residues 604 to 625 (HKPQTLSSFYSSSRPATASQRS) the composition is skewed to polar residues. The span at 704-715 (SRGGYNGRGWGS) shows a compositional bias: gly residues. A Phosphothreonine modification is found at T724. The segment covering 729–744 (IDSSAPETTSDSSPTL) has biased composition (polar residues). Residues S738, S741, and S745 each carry the phosphoserine modification. Positions 759–794 (GRGQDSDSISSSSSDSLGSSSSSGSRRASASGGARA) are enriched in low complexity. Over residues 795–811 (KTVEVGRYKGRRPESHA) the composition is skewed to basic and acidic residues. S852 and S1412 each carry phosphoserine.

The protein belongs to the ZSWIM8 family. Component of the SCF-like E3 ubiquitin-protein ligase complex which contains CUL3, RBX1, ELOB, ELOC and ZSWIM8. Interacts with DAB1.

The protein resides in the cytoplasm. It localises to the cytosol. The protein operates within protein modification; protein ubiquitination. Its function is as follows. Substrate recognition component of a SCF-like E3 ubiquitin-protein ligase complex that promotes target-directed microRNA degradation (TDMD), a process that mediates degradation of microRNAs (miRNAs). The SCF-like E3 ubiquitin-protein ligase complex acts by catalyzing ubiquitination and subsequent degradation of AGO proteins (AGO1, AGO2, AGO3 and/or AGO4), thereby exposing miRNAs for degradation. Specifically recognizes and binds AGO proteins when they are engaged with a TDMD target. May also acts as a regulator of axon guidance: specifically recognizes misfolded ROBO3 and promotes its ubiquitination and subsequent degradation. Plays an essential role for proper embryonic development of heart and lung. Controls protein quality of DAB1, a key signal molecule for brain development, thus protecting its signaling strength. Mechanistically, recognizes intrinsically disordered regions of DAB1 and eliminates misfolded DAB1 that cannot be properly phosphorylated. The polypeptide is Zinc finger SWIM domain-containing protein 8 (Bos taurus (Bovine)).